The following is a 1241-amino-acid chain: Dinoflagellate luciferase (1241 aa).

Luciferase stretches follow at residues 114–465 (KTGL…IKRD), 491–842 (DQGF…TKRD), and 868–1218 (EKGF…KKRD).

Belongs to the calycin superfamily. Luciferase family.

It localises to the cytoplasmic vesicle. It carries out the reaction dinoflagellate luciferin + O2 = oxidized dinoflagellate luciferin + hnu + H2O + H(+). With respect to regulation, regulated by pH: upon acidification, at a pH of 6.3, dinoflagellate luciferin is released from luciferin-binding protein LBP, allowing the interaction between Dinoflagellate luciferase and its substrate luciferin. Functionally, emits blue light flashes with a wavelength of 475 nm during the night phase. In Lingulodinium polyedra (Dinoflagellate), this protein is Dinoflagellate luciferase.